We begin with the raw amino-acid sequence, 371 residues long: Cathepsin W (371 aa).

The first 21 residues, 1–21, serve as a signal peptide directing secretion; that stretch reads MTLTAHLSYFLVLLLAGQGLS. Residues 22–125 constitute a propeptide that is removed on maturation; sequence DSLLTKDAGP…KVESNTWGES (104 aa). N48 and N112 each carry an N-linked (GlcNAc...) asparagine glycan. Intrachain disulfides connect C148/C189, C182/C224, and C282/C347. C151 is a catalytic residue. N203 carries an N-linked (GlcNAc...) asparagine glycan. Catalysis depends on residues H289 and N326. N344 carries N-linked (GlcNAc...) asparagine glycosylation.

It belongs to the peptidase C1 family.

The protein resides in the endoplasmic reticulum. In terms of biological role, may have a specific function in the mechanism or regulation of T-cell cytolytic activity. The sequence is that of Cathepsin W (Ctsw) from Mus musculus (Mouse).